The chain runs to 435 residues: GTPase Obg (435 aa).

The 158-residue stretch at 1 to 158 folds into the Obg domain; sequence MFIDRAKIYV…RWLYLELKLL (158 aa). Residues 159–328 enclose the OBG-type G domain; that stretch reads ADVGLVGLPN…LLELMEKYVR (170 aa). Residues 165-172, 190-194, 211-214, 280-283, and 309-311 contribute to the GTP site; these read GLPNAGKS, FTTKT, DIPG, NKID, and SAK. Serine 172 and threonine 192 together coordinate Mg(2+). The region spanning 343 to 426 is the OCT domain; the sequence is IQETKEGRVE…IGDYIFKYNA (84 aa).

Belongs to the TRAFAC class OBG-HflX-like GTPase superfamily. OBG GTPase family. In terms of assembly, monomer. The cofactor is Mg(2+).

Its subcellular location is the cytoplasm. An essential GTPase which binds GTP, GDP and possibly (p)ppGpp with moderate affinity, with high nucleotide exchange rates and a fairly low GTP hydrolysis rate. Plays a role in control of the cell cycle, stress response, ribosome biogenesis and in those bacteria that undergo differentiation, in morphogenesis control. This is GTPase Obg from Dictyoglomus thermophilum (strain ATCC 35947 / DSM 3960 / H-6-12).